The sequence spans 393 residues: 5-azacytidine-induced protein 2 (393 aa).

The segment at 1 to 198 is homodimerization; the sequence is MDALVEDDIC…IELQKAKQTD (198 aa). Residues 40–198 are a coiled coil; sequence ALVTAYEDIK…IELQKAKQTD (159 aa). Residues 217 to 258 are interaction with TBK1 and IKBKE; the sequence is SDNMQSAYWELKREMSNLHLVTQVQAELLRKLKTPAAIKKAC. The residue at position 319 (Ser-319) is a Phosphoserine. Disordered stretches follow at residues 321-340 and 345-393; these read TDHE…HNSY and LEDN…HYKH. At Ser-354 the chain carries Phosphoserine. Polar residues predominate over residues 384-393; it reads QHNQNCHYKH.

As to quaternary structure, homodimer. Interacts with IKBKE, TBK1 and TICAM1. Interacts with TAX1BP1. Interacts with CALCOCO2. Post-translationally, ubiquitinated via 'Lys-48'-linked polyubiquitination by TRIM38, leading to its degradation.

The protein localises to the cytoplasm. Functionally, adapter protein which binds TBK1 and IKBKE playing a role in antiviral innate immunity. Activates serine/threonine-protein kinase TBK1 and facilitates its oligomerization. Enhances the phosphorylation of NF-kappa-B p65 subunit RELA by TBK1. Promotes TBK1-induced as well as TNF-alpha or PMA-induced activation of NF-kappa-B. Participates in IFNB promoter activation via TICAM1. The polypeptide is 5-azacytidine-induced protein 2 (AZI2) (Bos taurus (Bovine)).